The primary structure comprises 69 residues: Cytochrome c oxidase subunit 8A, mitochondrial (69 aa).

Residues 1–25 (MSVLTPLLLRGLAGSARRLPVPRAQ) constitute a mitochondrion transit peptide. The SIFI-degron signature appears at 2–19 (SVLTPLLLRGLAGSARRL). The Mitochondrial matrix portion of the chain corresponds to 26-36 (IHSKPPREQLG). The chain crosses the membrane as a helical span at residues 37–60 (TMDVAIGITSCFLCFLLPAGWVLS). The Mitochondrial intermembrane segment spans residues 61–69 (HLESYKKRE).

This sequence belongs to the cytochrome c oxidase VIII family. Component of the cytochrome c oxidase (complex IV, CIV), a multisubunit enzyme composed of 14 subunits. The complex is composed of a catalytic core of 3 subunits MT-CO1, MT-CO2 and MT-CO3, encoded in the mitochondrial DNA, and 11 supernumerary subunits COX4I, COX5A, COX5B, COX6A, COX6B, COX6C, COX7A, COX7B, COX7C, COX8 and NDUFA4, which are encoded in the nuclear genome. The complex exists as a monomer or a dimer and forms supercomplexes (SCs) in the inner mitochondrial membrane with NADH-ubiquinone oxidoreductase (complex I, CI) and ubiquinol-cytochrome c oxidoreductase (cytochrome b-c1 complex, complex III, CIII), resulting in different assemblies (supercomplex SCI(1)III(2)IV(1) and megacomplex MCI(2)III(2)IV(2)). In terms of processing, in response to mitochondrial stress, the precursor protein is ubiquitinated by the SIFI complex in the cytoplasm before mitochondrial import, leading to its degradation. Within the SIFI complex, UBR4 initiates ubiquitin chain that are further elongated or branched by KCMF1.

The protein resides in the mitochondrion inner membrane. It participates in energy metabolism; oxidative phosphorylation. Component of the cytochrome c oxidase, the last enzyme in the mitochondrial electron transport chain which drives oxidative phosphorylation. The respiratory chain contains 3 multisubunit complexes succinate dehydrogenase (complex II, CII), ubiquinol-cytochrome c oxidoreductase (cytochrome b-c1 complex, complex III, CIII) and cytochrome c oxidase (complex IV, CIV), that cooperate to transfer electrons derived from NADH and succinate to molecular oxygen, creating an electrochemical gradient over the inner membrane that drives transmembrane transport and the ATP synthase. Cytochrome c oxidase is the component of the respiratory chain that catalyzes the reduction of oxygen to water. Electrons originating from reduced cytochrome c in the intermembrane space (IMS) are transferred via the dinuclear copper A center (CU(A)) of subunit 2 and heme A of subunit 1 to the active site in subunit 1, a binuclear center (BNC) formed by heme A3 and copper B (CU(B)). The BNC reduces molecular oxygen to 2 water molecules using 4 electrons from cytochrome c in the IMS and 4 protons from the mitochondrial matrix. The protein is Cytochrome c oxidase subunit 8A, mitochondrial (COX8A) of Carlito syrichta (Philippine tarsier).